We begin with the raw amino-acid sequence, 181 residues long: MDDLTAQALKEFTARYCDAWHEEHKSWPLSEELYGVPSPCIISTTEDAVYWQPQPFTGEQNVNAVERAFDIVIQSAIHTFYTTQFAGDIHAQFGDIKLTLLQTWSEDDFRRVQENLIGHLVTQKRLKLPPTLFIATLEEELEVISVCNLSGEVCKETLGTRKRTHLASNLAEFLNQLKPLL.

This sequence belongs to the Syd family.

Its subcellular location is the cell inner membrane. Functionally, interacts with the SecY protein in vivo. May bind preferentially to an uncomplexed state of SecY, thus functioning either as a chelating agent for excess SecY in the cell or as a regulatory factor that negatively controls the translocase function. The chain is Protein Syd from Shigella dysenteriae serotype 1 (strain Sd197).